The primary structure comprises 236 residues: Large ribosomal subunit protein uL1 (236 aa).

It belongs to the universal ribosomal protein uL1 family. In terms of assembly, part of the 50S ribosomal subunit.

In terms of biological role, binds directly to 23S rRNA. The L1 stalk is quite mobile in the ribosome, and is involved in E site tRNA release. Functionally, protein L1 is also a translational repressor protein, it controls the translation of the L11 operon by binding to its mRNA. The protein is Large ribosomal subunit protein uL1 of Sorangium cellulosum (strain So ce56) (Polyangium cellulosum (strain So ce56)).